A 348-amino-acid polypeptide reads, in one-letter code: NADH-ubiquinone oxidoreductase chain 2 (348 aa).

The next 10 helical transmembrane spans lie at 3–23, 25–45, 59–79, 93–115, 149–169, 178–198, 201–221, 239–259, 276–296, and 326–346; these read PIII…VLMS, HWFM…PVLM, YFLT…INLI, TAST…HFWV, LNMT…GWGG, ILAF…MFNP, TLLN…ILIF, IMTV…PLSG, IALA…YMRL, and LPTL…MMML.

The protein belongs to the complex I subunit 2 family. As to quaternary structure, core subunit of respiratory chain NADH dehydrogenase (Complex I) which is composed of 45 different subunits. Interacts with TMEM242.

The protein localises to the mitochondrion inner membrane. It carries out the reaction a ubiquinone + NADH + 5 H(+)(in) = a ubiquinol + NAD(+) + 4 H(+)(out). Core subunit of the mitochondrial membrane respiratory chain NADH dehydrogenase (Complex I) which catalyzes electron transfer from NADH through the respiratory chain, using ubiquinone as an electron acceptor. Essential for the catalytic activity and assembly of complex I. This is NADH-ubiquinone oxidoreductase chain 2 from Thyroptera tricolor (Spix's disk-winged bat).